The following is a 285-amino-acid chain: ATP synthase gamma chain (285 aa).

It belongs to the ATPase gamma chain family. As to quaternary structure, F-type ATPases have 2 components, CF(1) - the catalytic core - and CF(0) - the membrane proton channel. CF(1) has five subunits: alpha(3), beta(3), gamma(1), delta(1), epsilon(1). CF(0) has three main subunits: a, b and c.

The protein localises to the cell inner membrane. Its function is as follows. Produces ATP from ADP in the presence of a proton gradient across the membrane. The gamma chain is believed to be important in regulating ATPase activity and the flow of protons through the CF(0) complex. The chain is ATP synthase gamma chain from Protochlamydia amoebophila (strain UWE25).